The chain runs to 874 residues: Coatomer subunit gamma-1 (874 aa).

Residues 1–11 (MLKKFDKKDEE) show a composition bias toward basic and acidic residues. The interval 1 to 21 (MLKKFDKKDEESGGGSNPLQH) is disordered. 4 HEAT repeats span residues 64 to 101 (TEATEAFFAMTKLFQSNDPTLRRMCYLTIKEMSCIAED), 283 to 320 (KELAPAVSVLQLFCSSPKAALRYAAVRTLNKVAMKHPS), 322 to 355 (VTACNLDLENLVTDSNRSIATLAITTLLKTGSES), and 356 to 392 (SIDRLMKQISSFMSEISDEFKVVVVQAISALCQKYPR). A Phosphothreonine modification is found at Thr594. Residues 609–874 (RQEIFQEQLA…PVDIILASVG (266 aa)) are interaction with ZNF289/ARFGAP2.

The protein belongs to the COPG family. As to quaternary structure, oligomeric complex that consists of at least the alpha, beta, beta', gamma, delta, epsilon and zeta subunits. Interacts with ZNF289/ARFGAP2 through its C-terminal appendage domain. Interacts with EGFR upon EGF treatment; interaction is essential for regulation of EGF-dependent nuclear transport of EGFR by retrograde trafficking from the Golgi to the ER. The coatomer interacts with KDEL receptors; the interaction is important for retrograde trafficking of KDEL-bearing proteins from the Golgi to the endoplasmic reticulum. Interacts with COPB1. Interacts with TMED10 (via C-terminus). Interacts with TMED2, TMED3, TMED7 and TMED9.

It localises to the cytoplasm. It is found in the cytosol. The protein resides in the golgi apparatus membrane. Its subcellular location is the cytoplasmic vesicle. The protein localises to the COPI-coated vesicle membrane. Functionally, the coatomer is a cytosolic protein complex that binds to dilysine motifs and reversibly associates with Golgi non-clathrin-coated vesicles, which further mediate biosynthetic protein transport from the ER, via the Golgi up to the trans Golgi network. Coatomer complex is required for budding from Golgi membranes, and is essential for the retrograde Golgi-to-ER transport of dilysine-tagged proteins. In mammals, the coatomer can only be recruited by membranes associated to ADP-ribosylation factors (ARFs), which are small GTP-binding proteins; the complex also influences the Golgi structural integrity, as well as the processing, activity, and endocytic recycling of LDL receptors. Required for limiting lipid storage in lipid droplets. Involved in lipid homeostasis by regulating the presence of perilipin family members PLIN2 and PLIN3 at the lipid droplet surface and promoting the association of adipocyte triglyceride lipase (PNPLA2) with the lipid droplet surface to mediate lipolysis. The sequence is that of Coatomer subunit gamma-1 (Copg1) from Rattus norvegicus (Rat).